The following is a 209-amino-acid chain: Ribonuclease HII (209 aa).

One can recognise an RNase H type-2 domain in the interval 19 to 209; it reads CTIVGVDEVG…ASGITKLYNK (191 aa). Residues aspartate 25, glutamate 26, and aspartate 118 each coordinate a divalent metal cation.

Belongs to the RNase HII family. It depends on Mn(2+) as a cofactor. Mg(2+) is required as a cofactor.

It is found in the cytoplasm. It catalyses the reaction Endonucleolytic cleavage to 5'-phosphomonoester.. Its function is as follows. Endonuclease that specifically degrades the RNA of RNA-DNA hybrids. In Ehrlichia chaffeensis (strain ATCC CRL-10679 / Arkansas), this protein is Ribonuclease HII.